A 105-amino-acid polypeptide reads, in one-letter code: MANNVTDSSFKKEVLESDLPVLVDFWAEWCGPCKMLTPIIDEISKELKGKVKVLKMNIDENPNIPSEYGIRSIPTIMLFKNGEQKDTKIGLQQKNSLLDWINKSI.

Residues 1–105 enclose the Thioredoxin domain; it reads MANNVTDSSF…SLLDWINKSI (105 aa). The cysteines at positions 30 and 33 are disulfide-linked.

The protein belongs to the thioredoxin family.

Functionally, component of the thioredoxin-thioredoxin reductase system. Participates in various redox reactions through the reversible oxidation of its active center dithiol to a disulfide and catalyzes dithiol-disulfide exchange reactions. The polypeptide is Thioredoxin (trxA) (Rickettsia felis (strain ATCC VR-1525 / URRWXCal2) (Rickettsia azadi)).